A 63-amino-acid polypeptide reads, in one-letter code: Large ribosomal subunit protein uL30 (63 aa).

This sequence belongs to the universal ribosomal protein uL30 family. Part of the 50S ribosomal subunit.

This Rickettsia massiliae (strain Mtu5) protein is Large ribosomal subunit protein uL30.